The sequence spans 264 residues: Stage 0 sporulation protein A (264 aa).

The Response regulatory domain maps to 5–123; that stretch reads KVCLVDDNKE…NLTSHIRQVS (119 aa). Ca(2+)-binding residues include aspartate 10, aspartate 11, and aspartate 56. Aspartate 56 bears the 4-aspartylphosphate mark. The segment at residues 196 to 215 is a DNA-binding region (H-T-H motif); it reads PDIAKKYNTTASRVERAIRH.

It depends on Ca(2+) as a cofactor. Phosphorylated by KinA and KinB.

It is found in the cytoplasm. In terms of biological role, may play the central regulatory role in sporulation. It may be an element of the effector pathway responsible for the activation of sporulation genes in response to nutritional stress. Spo0A may act in concert with Spo0H (a sigma factor) to control the expression of some genes that are critical to the sporulation process. Repressor of abrB, activator of the spoIIa operon. Binds the DNA sequence 5'-TGNCGAA-3' (0A box). This chain is Stage 0 sporulation protein A (spo0A), found in Bacillus anthracis.